The chain runs to 264 residues: uncharacterized protein (264 aa).

3 stretches are compositionally biased toward polar residues: residues 1 to 18 (MFEN…SSRS), 73 to 83 (SLGSVGTTEVN), and 126 to 139 (KTTQ…QPVL). Disordered stretches follow at residues 1–47 (MFEN…WVGS) and 68–264 (RKEP…LSFE). The segment covering 149–171 (SSGQPQVSSSAQPSPADASQPEA) has biased composition (low complexity). Residues 194-212 (LIHKDGQDDPKLKVTECRR) are compositionally biased toward basic and acidic residues. Phosphoserine occurs at positions 214, 215, 241, and 250.

This is an uncharacterized protein from Bos taurus (Bovine).